Here is a 94-residue protein sequence, read N- to C-terminus: Exodeoxyribonuclease 7 small subunit (94 aa).

It belongs to the XseB family. Heterooligomer composed of large and small subunits.

It is found in the cytoplasm. The enzyme catalyses Exonucleolytic cleavage in either 5'- to 3'- or 3'- to 5'-direction to yield nucleoside 5'-phosphates.. Functionally, bidirectionally degrades single-stranded DNA into large acid-insoluble oligonucleotides, which are then degraded further into small acid-soluble oligonucleotides. The polypeptide is Exodeoxyribonuclease 7 small subunit (Ralstonia nicotianae (strain ATCC BAA-1114 / GMI1000) (Ralstonia solanacearum)).